A 435-amino-acid chain; its full sequence is Oocyte zinc finger protein XlCOF22 (435 aa).

A disordered region spans residues 71–92 (NANTSAHFSRNRDSDKHERTHT). A compositionally biased stretch (basic and acidic residues) spans 80–91 (RNRDSDKHERTH). C2H2-type zinc fingers lie at residues 97-120 (HSCSQCGKCFSSSSDLLAHRRQSH), 126-148 (FSCSECGKCFSFRSRLIDHQRTH), 154-176 (FCCFQCGKSFSVRSRFLDHRRTH), 182-204 (FSCLECGKCFLFRSRLLEHQRTH), 210-232 (FSCLKCGKCFSVRSRLKDHQRTH), 238-260 (FSCLECGKSFSFRPCLIDHQRTH), 266-288 (FSCFQCGKCFSFQSRLINHQRTH), 294-316 (FSCSECGKSFSNQSCLRVHQRTH), 322-345 (YSCSECGKSFVTSSQLAVHRRRTH), 351-373 (FSCSECGKCFSNQSCLRVHQRTH), 379-402 (FSCSECGKSFVTSSKLASHQRQTH), and 408-430 (VSCSECGKCFTRKRSLKVHFKIH).

The protein belongs to the krueppel C2H2-type zinc-finger protein family.

The protein resides in the nucleus. Its function is as follows. May be involved in transcriptional regulation. The protein is Oocyte zinc finger protein XlCOF22 of Xenopus laevis (African clawed frog).